The following is a 260-amino-acid chain: MSQALTYASYLKIDELLNLQTPRSHGPEHDELLFIVIHQVYELWFKQILHELDYLCDLLRANDTGRANQSIRRILTILKTIVAQVDVMETMTPLQFNAFRGSLESASGFQSLQFREIEFVLGYKRPAILQHFAALPSHERLEQRYQEPSLWDSFLHYLQLNGYAIPSEQIGRDVTQSLVASPAIQTILITVYRQNPLVSNLCERLIDLDEGFQEWRYRHVKMVERTIGMKQGTGGSSGAAYLASTIKPFFPDLWAIRADL.

Substrate is bound by residues 34 to 38 (FIVIH) and Arg-100. His-219 contributes to the heme binding site. Substrate is bound at residue Thr-233.

This sequence belongs to the tryptophan 2,3-dioxygenase family. In terms of assembly, homotetramer. Heme is required as a cofactor.

The catalysed reaction is L-tryptophan + O2 = N-formyl-L-kynurenine. Its pathway is amino-acid degradation; L-tryptophan degradation via kynurenine pathway; L-kynurenine from L-tryptophan: step 1/2. Heme-dependent dioxygenase that catalyzes the oxidative cleavage of the L-tryptophan (L-Trp) pyrrole ring and converts L-tryptophan to N-formyl-L-kynurenine. Catalyzes the oxidative cleavage of the indole moiety. The sequence is that of Tryptophan 2,3-dioxygenase from Herpetosiphon aurantiacus (strain ATCC 23779 / DSM 785 / 114-95).